The chain runs to 122 residues: Large ribosomal subunit protein uL14c (122 aa).

This sequence belongs to the universal ribosomal protein uL14 family. As to quaternary structure, part of the 50S ribosomal subunit.

It localises to the plastid. Its subcellular location is the chloroplast. Its function is as follows. Binds to 23S rRNA. The sequence is that of Large ribosomal subunit protein uL14c from Illicium oligandrum (Star anise).